A 213-amino-acid chain; its full sequence is Peptidoglycan-N-acetylglucosamine deacetylase BC_3618 (213 aa).

Residues 22 to 203 (KIIAITFDDG…ELKKQGYRFV (182 aa)) form the NodB homology domain. Aspartate 29 (proton acceptor) is an active-site residue. Residues aspartate 30, histidine 80, and histidine 84 each contribute to the Zn(2+) site. Residue histidine 175 is the Proton donor of the active site.

Belongs to the polysaccharide deacetylase family. Requires Zn(2+) as cofactor.

It catalyses the reaction peptidoglycan-N-acetyl-D-glucosamine + H2O = peptidoglycan-D-glucosamine + acetate.. Inhibited by CuCl(2) and ZnCl(2). Its function is as follows. Catalyzes the deacetylation of N-acetylglucosamine (GlcNAc) residues in peptidoglycan. Also acts on soluble chitin substrates and N-acetylchitooligomers. Acts on cell wall peptidoglycan from the Gram-positive bacteria B.cereus and B.subtilis and the Gram-negative bacterium H.pylori. Not active on acetylated xylan. This Bacillus cereus (strain ATCC 14579 / DSM 31 / CCUG 7414 / JCM 2152 / NBRC 15305 / NCIMB 9373 / NCTC 2599 / NRRL B-3711) protein is Peptidoglycan-N-acetylglucosamine deacetylase BC_3618.